The sequence spans 142 residues: Large ribosomal subunit protein uL13 (142 aa).

It belongs to the universal ribosomal protein uL13 family. As to quaternary structure, part of the 50S ribosomal subunit.

This protein is one of the early assembly proteins of the 50S ribosomal subunit, although it is not seen to bind rRNA by itself. It is important during the early stages of 50S assembly. The protein is Large ribosomal subunit protein uL13 of Francisella tularensis subsp. holarctica (strain FTNF002-00 / FTA).